The sequence spans 939 residues: Translation initiation factor IF-2 (939 aa).

Disordered stretches follow at residues 51–81 and 137–353; these read LGTK…GGKK and VTNK…EMKA. Positions 181-210 are enriched in basic and acidic residues; sequence NEKKAGAPEIKRAEHTETVEKSKTAVDSKK. Low complexity predominate over residues 259–277; that stretch reads PVNRSPRPSTPSPNRSAGG. Positions 300–312 are enriched in basic and acidic residues; that stretch reads RRDEKPAERDSRP. Residues 437–606 form the tr-type G domain; the sequence is GRCPVVTVMG…QLAAEMLELK (170 aa). The tract at residues 446-453 is G1; the sequence is GHVDHGKT. Residue 446–453 coordinates GTP; sequence GHVDHGKT. A G2 region spans residues 471 to 475; that stretch reads GITQH. Residues 492–495 form a G3 region; it reads DTPG. GTP-binding positions include 492-496 and 546-549; these read DTPGH and NKID. Residues 546-549 form a G4 region; that stretch reads NKID. A G5 region spans residues 582–584; it reads SAK.

This sequence belongs to the TRAFAC class translation factor GTPase superfamily. Classic translation factor GTPase family. IF-2 subfamily.

The protein resides in the cytoplasm. One of the essential components for the initiation of protein synthesis. Protects formylmethionyl-tRNA from spontaneous hydrolysis and promotes its binding to the 30S ribosomal subunits. Also involved in the hydrolysis of GTP during the formation of the 70S ribosomal complex. This is Translation initiation factor IF-2 from Desulfotalea psychrophila (strain LSv54 / DSM 12343).